A 491-amino-acid polypeptide reads, in one-letter code: Ketol-acid reductoisomerase (NADP(+)) (491 aa).

Residues Ala-15–Ser-208 form the KARI N-terminal Rossmann domain. NADP(+) is bound by residues Cys-45 to Gln-48, Arg-68, Arg-76, Ser-78, and Asp-108 to Gln-110. His-132 is a catalytic residue. Gly-158 is a binding site for NADP(+). KARI C-terminal knotted domains lie at Ser-209–Gln-344 and Tyr-345–Met-484. Positions 217, 221, 389, and 393 each coordinate Mg(2+). Ser-414 provides a ligand contact to substrate.

It belongs to the ketol-acid reductoisomerase family. It depends on Mg(2+) as a cofactor.

It catalyses the reaction (2R)-2,3-dihydroxy-3-methylbutanoate + NADP(+) = (2S)-2-acetolactate + NADPH + H(+). The catalysed reaction is (2R,3R)-2,3-dihydroxy-3-methylpentanoate + NADP(+) = (S)-2-ethyl-2-hydroxy-3-oxobutanoate + NADPH + H(+). It participates in amino-acid biosynthesis; L-isoleucine biosynthesis; L-isoleucine from 2-oxobutanoate: step 2/4. Its pathway is amino-acid biosynthesis; L-valine biosynthesis; L-valine from pyruvate: step 2/4. In terms of biological role, involved in the biosynthesis of branched-chain amino acids (BCAA). Catalyzes an alkyl-migration followed by a ketol-acid reduction of (S)-2-acetolactate (S2AL) to yield (R)-2,3-dihydroxy-isovalerate. In the isomerase reaction, S2AL is rearranged via a Mg-dependent methyl migration to produce 3-hydroxy-3-methyl-2-ketobutyrate (HMKB). In the reductase reaction, this 2-ketoacid undergoes a metal-dependent reduction by NADPH to yield (R)-2,3-dihydroxy-isovalerate. The chain is Ketol-acid reductoisomerase (NADP(+)) from Shigella flexneri.